The primary structure comprises 136 residues: Class I hydrophobin A (136 aa).

The N-terminal stretch at 1-16 is a signal peptide; the sequence is MRFALAITTLIAAVTA. 4 disulfides stabilise this stretch: Cys39-Cys109, Cys47-Cys103, Cys48-Cys85, and Cys110-Cys128.

It belongs to the fungal hydrophobin family. As to expression, expressed in aerial conidia, in vitro blastospores, submerged conidia, and cells sporulating on chitin and insect cuticle, with hyd1 expression peaking in growing mycelia.

It localises to the secreted. The protein localises to the cell wall. The protein resides in the spore coat. It is found in the vacuole. Its subcellular location is the cytoplasmic vesicle. Its function is as follows. Aerial growth, conidiation, and dispersal of filamentous fungi in the environment rely upon a capability of their secreting small amphipathic proteins called hydrophobins (HPBs) with low sequence identity. Class I can self-assemble into an outermost layer of rodlet bundles on aerial cell surfaces, conferring cellular hydrophobicity that supports fungal growth, development and dispersal; whereas Class II form highly ordered films at water-air interfaces through intermolecular interactions but contribute nothing to the rodlet structure. Hyd1A contributes to certain cell wall-related features, such as hydrophobicity but is not involved in cell wall-related events during fungal proliferation in host hemocoel. Hyd1A and hyd1B coregulate the formation, morphology and orderly assembly of rodlet bundles required for conidial hydrophobicity and infectivity. Contributes to the spore coat rodlet layer. The polypeptide is Class I hydrophobin A (Beauveria bassiana (strain ARSEF 2860) (White muscardine disease fungus)).